We begin with the raw amino-acid sequence, 129 residues long: Small ribosomal subunit protein uS8c (129 aa).

The protein belongs to the universal ribosomal protein uS8 family. In terms of assembly, part of the 30S ribosomal subunit.

The protein resides in the plastid. Its subcellular location is the chloroplast. One of the primary rRNA binding proteins, it binds directly to 16S rRNA central domain where it helps coordinate assembly of the platform of the 30S subunit. In Nephroselmis olivacea (Green alga), this protein is Small ribosomal subunit protein uS8c (rps8).